The following is an 810-amino-acid chain: Valine--tRNA ligase (810 aa).

Residues 45–55 carry the 'HIGH' region motif; sequence PTISGQLHIGH. Positions 534–538 match the 'KMSKS' region motif; the sequence is KMSKS. Lysine 537 contributes to the ATP binding site.

It belongs to the class-I aminoacyl-tRNA synthetase family. ValS type 2 subfamily. Monomer.

The protein localises to the cytoplasm. It catalyses the reaction tRNA(Val) + L-valine + ATP = L-valyl-tRNA(Val) + AMP + diphosphate. Functionally, catalyzes the attachment of valine to tRNA(Val). As ValRS can inadvertently accommodate and process structurally similar amino acids such as threonine, to avoid such errors, it has a 'posttransfer' editing activity that hydrolyzes mischarged Thr-tRNA(Val) in a tRNA-dependent manner. This chain is Valine--tRNA ligase, found in Ehrlichia ruminantium (strain Welgevonden).